Here is a 396-residue protein sequence, read N- to C-terminus: Elongation factor Tu (396 aa).

A tr-type G domain is found at 10–206 (KPHVNVGTIG…ALDTYIPTPE (197 aa)). Residues 19-26 (GHVDHGKT) are G1. Residue 19–26 (GHVDHGKT) participates in GTP binding. T26 contributes to the Mg(2+) binding site. A G2 region spans residues 60 to 64 (GITIN). The tract at residues 81–84 (DCPG) is G3. Residues 81–85 (DCPGH) and 136–139 (NKAD) contribute to the GTP site. The segment at 136-139 (NKAD) is G4. The interval 174 to 176 (SAK) is G5.

It belongs to the TRAFAC class translation factor GTPase superfamily. Classic translation factor GTPase family. EF-Tu/EF-1A subfamily. As to quaternary structure, monomer.

It localises to the cytoplasm. It carries out the reaction GTP + H2O = GDP + phosphate + H(+). GTP hydrolase that promotes the GTP-dependent binding of aminoacyl-tRNA to the A-site of ribosomes during protein biosynthesis. The polypeptide is Elongation factor Tu (Janthinobacterium sp. (strain Marseille) (Minibacterium massiliensis)).